Consider the following 501-residue polypeptide: Carboxypeptidase 1 (501 aa).

The Peptidase M32 domain maps to I3–S496. An HPF motif is present at residues H234–F236. Positions D244–T248 match the DXRXT motif. Position 265 (H265) interacts with Zn(2+). An HEXXH motif is present at residues H265–H269. E266 serves as the catalytic Proton donor/acceptor. Zn(2+) is bound by residues H269 and E295. Positions H294–Q297 match the HES/GQ motif. Positions I347–D352 match the I/NRXXA/SD motif. The short motif at G402–W409 is the GXXQDXHW element.

Belongs to the peptidase M32 family. In terms of assembly, homodimer. The cofactor is Zn(2+).

It carries out the reaction Release of a C-terminal amino acid with broad specificity, except for -Pro.. In terms of biological role, broad specificity carboxypetidase that releases amino acids sequentially from the C-terminus, including neutral, aromatic, polar and basic residues. Has lower activity with substrates ending with His or Trp. The sequence is that of Carboxypeptidase 1 (ypwA) from Bacillus subtilis (strain 168).